The primary structure comprises 294 residues: GTPase Era (294 aa).

Positions 3–170 (KSGFISIIGR…LELMIKYMPE (168 aa)) constitute an Era-type G domain. The tract at residues 11–18 (GRPNVGKS) is G1. A GTP-binding site is contributed by 11 to 18 (GRPNVGKS). Positions 37–41 (QTTRN) are G2. A G3 region spans residues 58 to 61 (DTPG). GTP is bound by residues 58–62 (DTPGI) and 120–123 (NKID). The interval 120–123 (NKID) is G4. A G5 region spans residues 149-151 (ISA). The 78-residue stretch at 201–278 (LSEEVPHGIA…NLKVWVKVKK (78 aa)) folds into the KH type-2 domain.

Belongs to the TRAFAC class TrmE-Era-EngA-EngB-Septin-like GTPase superfamily. Era GTPase family. In terms of assembly, monomer.

Its subcellular location is the cytoplasm. The protein localises to the cell membrane. In terms of biological role, an essential GTPase that binds both GDP and GTP, with rapid nucleotide exchange. Plays a role in 16S rRNA processing and 30S ribosomal subunit biogenesis and possibly also in cell cycle regulation and energy metabolism. In Clostridium novyi (strain NT), this protein is GTPase Era.